The following is a 93-amino-acid chain: Pyrimidine/purine nucleoside phosphorylase (93 aa).

The protein belongs to the nucleoside phosphorylase PpnP family.

It carries out the reaction a purine D-ribonucleoside + phosphate = a purine nucleobase + alpha-D-ribose 1-phosphate. It catalyses the reaction adenosine + phosphate = alpha-D-ribose 1-phosphate + adenine. The catalysed reaction is cytidine + phosphate = cytosine + alpha-D-ribose 1-phosphate. The enzyme catalyses guanosine + phosphate = alpha-D-ribose 1-phosphate + guanine. It carries out the reaction inosine + phosphate = alpha-D-ribose 1-phosphate + hypoxanthine. It catalyses the reaction thymidine + phosphate = 2-deoxy-alpha-D-ribose 1-phosphate + thymine. The catalysed reaction is uridine + phosphate = alpha-D-ribose 1-phosphate + uracil. The enzyme catalyses xanthosine + phosphate = alpha-D-ribose 1-phosphate + xanthine. Catalyzes the phosphorolysis of diverse nucleosides, yielding D-ribose 1-phosphate and the respective free bases. Can use uridine, adenosine, guanosine, cytidine, thymidine, inosine and xanthosine as substrates. Also catalyzes the reverse reactions. This is Pyrimidine/purine nucleoside phosphorylase from Sorangium cellulosum (strain So ce56) (Polyangium cellulosum (strain So ce56)).